The primary structure comprises 161 residues: Cyclic pyranopterin monophosphate synthase (161 aa).

Substrate is bound by residues 73–75 (LCH) and 110–111 (ME). The active site involves Asp-125.

Belongs to the MoaC family. In terms of assembly, homohexamer; trimer of dimers.

The enzyme catalyses (8S)-3',8-cyclo-7,8-dihydroguanosine 5'-triphosphate = cyclic pyranopterin phosphate + diphosphate. It participates in cofactor biosynthesis; molybdopterin biosynthesis. Its function is as follows. Catalyzes the conversion of (8S)-3',8-cyclo-7,8-dihydroguanosine 5'-triphosphate to cyclic pyranopterin monophosphate (cPMP). The protein is Cyclic pyranopterin monophosphate synthase of Pseudomonas syringae pv. tomato (strain ATCC BAA-871 / DC3000).